A 269-amino-acid polypeptide reads, in one-letter code: Shikimate dehydrogenase (NADP(+)) (269 aa).

Shikimate contacts are provided by residues 22 to 24 (TLS) and Thr68. The active-site Proton acceptor is the Lys72. Shikimate contacts are provided by Asn93 and Asp104. NADP(+)-binding positions include 128 to 132 (GAGGA), 152 to 157 (NRTNLR), and Phe210. Tyr212 provides a ligand contact to shikimate. NADP(+) is bound at residue Gly233.

It belongs to the shikimate dehydrogenase family. Homodimer.

It catalyses the reaction shikimate + NADP(+) = 3-dehydroshikimate + NADPH + H(+). The protein operates within metabolic intermediate biosynthesis; chorismate biosynthesis; chorismate from D-erythrose 4-phosphate and phosphoenolpyruvate: step 4/7. Involved in the biosynthesis of the chorismate, which leads to the biosynthesis of aromatic amino acids. Catalyzes the reversible NADPH linked reduction of 3-dehydroshikimate (DHSA) to yield shikimate (SA). This Saccharolobus islandicus (strain L.S.2.15 / Lassen #1) (Sulfolobus islandicus) protein is Shikimate dehydrogenase (NADP(+)).